The following is a 287-amino-acid chain: Large ribosomal subunit protein uL2 (287 aa).

The interval 222 to 266 (RGIRPTVRGSAMNPNDHPHGGGEGRSPVGRDAPRTPWGKRHMGVK) is disordered.

It belongs to the universal ribosomal protein uL2 family. Part of the 50S ribosomal subunit. Forms a bridge to the 30S subunit in the 70S ribosome.

Functionally, one of the primary rRNA binding proteins. Required for association of the 30S and 50S subunits to form the 70S ribosome, for tRNA binding and peptide bond formation. It has been suggested to have peptidyltransferase activity; this is somewhat controversial. Makes several contacts with the 16S rRNA in the 70S ribosome. The sequence is that of Large ribosomal subunit protein uL2 from Mycoplasma pneumoniae (strain ATCC 29342 / M129 / Subtype 1) (Mycoplasmoides pneumoniae).